A 118-amino-acid polypeptide reads, in one-letter code: UPF0102 protein Arth_2474 (118 aa).

It belongs to the UPF0102 family.

The sequence is that of UPF0102 protein Arth_2474 from Arthrobacter sp. (strain FB24).